The following is a 184-amino-acid chain: Threonylcarbamoyl-AMP synthase (184 aa).

Positions Met-1 to Gly-184 constitute a YrdC-like domain.

This sequence belongs to the SUA5 family. TsaC subfamily.

The protein resides in the cytoplasm. It catalyses the reaction L-threonine + hydrogencarbonate + ATP = L-threonylcarbamoyladenylate + diphosphate + H2O. In terms of biological role, required for the formation of a threonylcarbamoyl group on adenosine at position 37 (t(6)A37) in tRNAs that read codons beginning with adenine. Catalyzes the conversion of L-threonine, HCO(3)(-)/CO(2) and ATP to give threonylcarbamoyl-AMP (TC-AMP) as the acyladenylate intermediate, with the release of diphosphate. In Haemophilus ducreyi (strain 35000HP / ATCC 700724), this protein is Threonylcarbamoyl-AMP synthase.